The chain runs to 134 residues: Endoribonuclease YbeY (134 aa).

Zn(2+)-binding residues include H94, H98, and H104.

This sequence belongs to the endoribonuclease YbeY family. Zn(2+) is required as a cofactor.

It is found in the cytoplasm. In terms of biological role, single strand-specific metallo-endoribonuclease involved in late-stage 70S ribosome quality control and in maturation of the 3' terminus of the 16S rRNA. This Campylobacter jejuni subsp. jejuni serotype O:23/36 (strain 81-176) protein is Endoribonuclease YbeY.